Consider the following 183-residue polypeptide: GMP synthase [glutamine-hydrolyzing] subunit A (183 aa).

The 182-residue stretch at 2-183 (KIYVIYNYGQ…YRNFIEICKK (182 aa)) folds into the Glutamine amidotransferase type-1 domain. The active-site Nucleophile is Cys74. Residues His161 and Glu163 contribute to the active site.

In terms of assembly, heterodimer composed of a glutamine amidotransferase subunit (A) and a GMP-binding subunit (B).

The enzyme catalyses XMP + L-glutamine + ATP + H2O = GMP + L-glutamate + AMP + diphosphate + 2 H(+). It functions in the pathway purine metabolism; GMP biosynthesis; GMP from XMP (L-Gln route): step 1/1. Catalyzes the synthesis of GMP from XMP. The protein is GMP synthase [glutamine-hydrolyzing] subunit A of Archaeoglobus fulgidus (strain ATCC 49558 / DSM 4304 / JCM 9628 / NBRC 100126 / VC-16).